Reading from the N-terminus, the 89-residue chain is Otospiralin (89 aa).

The signal sequence occupies residues 1–21 (MQPCVLWWLALGLLLGIPAGA).

It belongs to the otospiralin family. As to expression, ear specific. Expressed in the cochlea and vestibule, but not in the cochlear nerve, cochlear nucleus, spinal chord, muscle, cerebral cortex, cerebellum, diencephalon and olfactory bulb. In the cochlea, expressed in fibrocytes of the spiral limbus, spiral ligament and suprastrial zone. In the vestibule, expressed in cells located to the stroma below the macular and crista sensory epithelia and in the subepithelial layer of the walls of semicircular canals and maculae.

The protein resides in the secreted. In terms of biological role, may be essential for the survival of the neurosensory epithelium of the inner ear. This chain is Otospiralin (Otos), found in Rattus norvegicus (Rat).